Here is a 309-residue protein sequence, read N- to C-terminus: Ribosomal RNA small subunit methyltransferase H (309 aa).

Residues 33–35, D53, F79, D100, and Q107 each bind S-adenosyl-L-methionine; that span reads GGH.

Belongs to the methyltransferase superfamily. RsmH family.

Its subcellular location is the cytoplasm. The catalysed reaction is cytidine(1402) in 16S rRNA + S-adenosyl-L-methionine = N(4)-methylcytidine(1402) in 16S rRNA + S-adenosyl-L-homocysteine + H(+). In terms of biological role, specifically methylates the N4 position of cytidine in position 1402 (C1402) of 16S rRNA. The polypeptide is Ribosomal RNA small subunit methyltransferase H (Clostridium botulinum (strain 657 / Type Ba4)).